A 300-amino-acid polypeptide reads, in one-letter code: NADH-cytochrome b5 reductase 2 (300 aa).

Residues 12–29 (FVYPLVGATIGSIGLAYY) form a helical membrane-spanning segment. An FAD-binding FR-type domain is found at 49–153 (DQWIDLKLKK…KGPVVKWKWE (105 aa)). 156-191 (QFKSIALIGGGTGITPLYQLLREITSNPEDKTKVSL) is an FAD binding site.

This sequence belongs to the flavoprotein pyridine nucleotide cytochrome reductase family. FAD serves as cofactor.

The protein localises to the mitochondrion outer membrane. The catalysed reaction is 2 Fe(III)-[cytochrome b5] + NADH = 2 Fe(II)-[cytochrome b5] + NAD(+) + H(+). Its function is as follows. May mediate the reduction of outer membrane cytochrome b5. The sequence is that of NADH-cytochrome b5 reductase 2 (MCR1) from Lodderomyces elongisporus (strain ATCC 11503 / CBS 2605 / JCM 1781 / NBRC 1676 / NRRL YB-4239) (Yeast).